We begin with the raw amino-acid sequence, 261 residues long: Transcription antitermination protein NusB (261 aa).

A disordered region spans residues 168 to 261 (ARVEDQPSDD…DLHKKDTTDD (94 aa)). Polar residues predominate over residues 217–228 (VDTTSGNASDPE). Residues 242 to 261 (PTSKDHELATDLHKKDTTDD) show a composition bias toward basic and acidic residues.

The protein belongs to the NusB family.

Functionally, involved in transcription antitermination. Required for transcription of ribosomal RNA (rRNA) genes. Binds specifically to the boxA antiterminator sequence of the ribosomal RNA (rrn) operons. This chain is Transcription antitermination protein NusB, found in Cutibacterium acnes (strain DSM 16379 / KPA171202) (Propionibacterium acnes).